A 194-amino-acid chain; its full sequence is Large ribosomal subunit protein bL9 (194 aa).

Over residues 156–167 (RGEDISSRREDQ) the composition is skewed to basic and acidic residues. The segment at 156 to 194 (RGEDISSRREDQDAAAEAIAAAGEFFDPDAQQDEEPEQQ) is disordered. The span at 181 to 194 (FDPDAQQDEEPEQQ) shows a compositional bias: acidic residues.

This sequence belongs to the bacterial ribosomal protein bL9 family.

In terms of biological role, binds to the 23S rRNA. The chain is Large ribosomal subunit protein bL9 from Rhodopseudomonas palustris (strain BisB5).